A 459-amino-acid chain; its full sequence is Transcriptional coactivator YAP1 (459 aa).

A phosphoserine; by LATS1 and LATS2 mark is found at Ser21, Ser69, Ser87, and Ser119. Disordered stretches follow at residues 51-88 and 103-129; these read LPDS…AHSS and SGMA…VPLP. WW domains lie at 126-159 and 186-219; these read VPLP…DPRK and GPLP…DPRL. 2 disordered regions span residues 231–254 and 307–364; these read TQSA…MGGN and PTSM…SSYS. The transactivation domain stretch occupies residues 247-459; it reads HGGVMGGNNQ…IDKESFLTWL (213 aa). Polar residues-rich tracts occupy residues 307–347 and 355–364; these read PTSM…SGTY and DSGLSMSSYS.

The protein belongs to the YAP1 family. Phosphorylated by lats1 and lats2; leading to cytoplasmic translocation and inactivation. In terms of tissue distribution, ubiquitously expressed throughout development.

The protein resides in the cytoplasm. Its subcellular location is the nucleus. It is found in the cell junction. The protein localises to the tight junction. It localises to the cell membrane. Functionally, transcriptional regulator which can act both as a coactivator and a corepressor and is the critical downstream regulatory target in the Hippo signaling pathway that plays a pivotal role in organ size control and tumor suppression by restricting proliferation and promoting apoptosis. Plays a key role in tissue tension and 3D tissue shape by regulating cortical actomyosin network formation. This Oryzias latipes (Japanese rice fish) protein is Transcriptional coactivator YAP1.